The following is a 234-amino-acid chain: 2-amino-5-formylamino-6-ribosylaminopyrimidin-4(3H)-one 5'-monophosphate deformylase (234 aa).

The Fe cation site is built by E29, H31, D40, and H109.

It belongs to the creatininase superfamily. FAPy deformylase family. In terms of assembly, homodimer. Fe(2+) is required as a cofactor. It depends on Zn(2+) as a cofactor.

The enzyme catalyses 2-amino-5-formylamino-6-(5-phospho-D-ribosylamino)pyrimidin-4(3H)-one + H2O = 2,5-diamino-6-(1-D-ribosylamino)pyrimidin-4(3H)-one 5'-phosphate + formate + H(+). Its pathway is cofactor biosynthesis; coenzyme F420 biosynthesis. The protein operates within cofactor biosynthesis; riboflavin biosynthesis. Catalyzes the hydrolysis of the formamide of 2-amino-5-formylamino-6-ribosylamino-4(3H)-pyrimidinone 5'-monophosphate (FAPy) to form 2,5-diamino-6-ribosylamino-4(3H)-pyrimidinone 5'-phosphate (APy). The sequence is that of 2-amino-5-formylamino-6-ribosylaminopyrimidin-4(3H)-one 5'-monophosphate deformylase from Methanobrevibacter ruminantium (strain ATCC 35063 / DSM 1093 / JCM 13430 / OCM 146 / M1) (Methanobacterium ruminantium).